The following is a 31-amino-acid chain: U14-ctenitoxin-Co1c (31 aa).

As to expression, expressed by the venom gland.

The protein localises to the secreted. In terms of biological role, not toxic to mice by intracerebroventricular injection. This is U14-ctenitoxin-Co1c from Ctenus ornatus (Brazilian spider).